Reading from the N-terminus, the 150-residue chain is UPF0506 protein SJCHGC02380 (150 aa).

A signal peptide spans 1-18 (MNTCIQLLILCLVTVINS). Asn20, Asn24, Asn36, Asn48, Asn52, and Asn110 each carry an N-linked (GlcNAc...) asparagine glycan. Disulfide bonds link Cys116-Cys130, Cys123-Cys134, and Cys129-Cys139.

It belongs to the UPF0506 family.

Its subcellular location is the secreted. This chain is UPF0506 protein SJCHGC02380, found in Schistosoma japonicum (Blood fluke).